A 72-amino-acid chain; its full sequence is DNA-directed RNA polymerase subunit omega (72 aa).

Belongs to the RNA polymerase subunit omega family. As to quaternary structure, the RNAP catalytic core consists of 2 alpha, 1 beta, 1 beta' and 1 omega subunit. When a sigma factor is associated with the core the holoenzyme is formed, which can initiate transcription.

The catalysed reaction is RNA(n) + a ribonucleoside 5'-triphosphate = RNA(n+1) + diphosphate. In terms of biological role, promotes RNA polymerase assembly. Latches the N- and C-terminal regions of the beta' subunit thereby facilitating its interaction with the beta and alpha subunits. The chain is DNA-directed RNA polymerase subunit omega from Clostridium acetobutylicum (strain ATCC 824 / DSM 792 / JCM 1419 / IAM 19013 / LMG 5710 / NBRC 13948 / NRRL B-527 / VKM B-1787 / 2291 / W).